A 119-amino-acid polypeptide reads, in one-letter code: Ig heavy chain V region T601 (119 aa).

Positions 1–112 (EVKLLESGGG…GYFDVWGAGT (112 aa)) constitute an Ig-like domain.

This Mus musculus (Mouse) protein is Ig heavy chain V region T601.